We begin with the raw amino-acid sequence, 574 residues long: Isocitrate dehydrogenase kinase/phosphatase (574 aa).

Residues 315-321 (APGIRGM) and lysine 336 contribute to the ATP site. Aspartate 371 is a catalytic residue.

This sequence belongs to the AceK family.

Its subcellular location is the cytoplasm. The catalysed reaction is L-seryl-[isocitrate dehydrogenase] + ATP = O-phospho-L-seryl-[isocitrate dehydrogenase] + ADP + H(+). In terms of biological role, bifunctional enzyme which can phosphorylate or dephosphorylate isocitrate dehydrogenase (IDH) on a specific serine residue. This is a regulatory mechanism which enables bacteria to bypass the Krebs cycle via the glyoxylate shunt in response to the source of carbon. When bacteria are grown on glucose, IDH is fully active and unphosphorylated, but when grown on acetate or ethanol, the activity of IDH declines drastically concomitant with its phosphorylation. The protein is Isocitrate dehydrogenase kinase/phosphatase of Escherichia coli O127:H6 (strain E2348/69 / EPEC).